We begin with the raw amino-acid sequence, 430 residues long: Enolase (430 aa).

Gln163 is a binding site for (2R)-2-phosphoglycerate. Residue Glu205 is the Proton donor of the active site. Mg(2+) is bound by residues Asp242, Glu287, and Asp314. (2R)-2-phosphoglycerate is bound by residues Lys339, Arg368, Ser369, and Lys390. Residue Lys339 is the Proton acceptor of the active site.

The protein belongs to the enolase family. It depends on Mg(2+) as a cofactor.

The protein resides in the cytoplasm. It is found in the secreted. The protein localises to the cell surface. The enzyme catalyses (2R)-2-phosphoglycerate = phosphoenolpyruvate + H2O. The protein operates within carbohydrate degradation; glycolysis; pyruvate from D-glyceraldehyde 3-phosphate: step 4/5. Functionally, catalyzes the reversible conversion of 2-phosphoglycerate (2-PG) into phosphoenolpyruvate (PEP). It is essential for the degradation of carbohydrates via glycolysis. This is Enolase from Clostridioides difficile (strain 630) (Peptoclostridium difficile).